The primary structure comprises 232 residues: 26S proteasome non-ATPase regulatory subunit 10 (232 aa).

ANK repeat units lie at residues 45–75, 79–108, 112–141, 144–173, 177–206, and 210–232; these read DERTPLHWAAAKGQISVAQYLMDNCKCSPNT, GGWTPLTSATSAGHTHMVKLLLEFGADPNT, SKRTPLHYASSKGRSDIVDLLLTHGAKNRK, TGSAPIHRASSNGSVATVERLLKGEANINS, EGDTPLHIAAEYNHEDVVECLLKHGADTTI, and DSKTPIDMSSSQTIKYLIKEFKK.

In terms of biological role, acts as a chaperone during the assembly of the 26S proteasome, specifically of the 19S regulatory complex (RC). The polypeptide is 26S proteasome non-ATPase regulatory subunit 10 (psmD10) (Dictyostelium discoideum (Social amoeba)).